The chain runs to 400 residues: Glycerol-3-phosphate dehydrogenase [NAD(+)] 1, chloroplastic (400 aa).

A chloroplast-targeting transit peptide spans 1 to 32 (MRFRSFFFSSSIFSLSHSRSPSLSSSRFSSLS). Residues 61 to 66 (GSGNWG), F92, F149, K172, and A205 each bind NAD(+). K172 is a substrate binding site. K257 acts as the Proton acceptor in catalysis. 3 residues coordinate NAD(+): R321, K350, and Q352. A substrate-binding site is contributed by 321 to 322 (RN).

This sequence belongs to the NAD-dependent glycerol-3-phosphate dehydrogenase family. In terms of tissue distribution, expressed in young seedlings, flowers and siliques. Expressed at low levels in roots.

It localises to the plastid. Its subcellular location is the chloroplast. The enzyme catalyses sn-glycerol 3-phosphate + NAD(+) = dihydroxyacetone phosphate + NADH + H(+). It functions in the pathway membrane lipid metabolism; glycerophospholipid metabolism. Functionally, involved in glycerolipid metabolism. The sequence is that of Glycerol-3-phosphate dehydrogenase [NAD(+)] 1, chloroplastic (DHAPRD) from Arabidopsis thaliana (Mouse-ear cress).